We begin with the raw amino-acid sequence, 209 residues long: Nucleoside triphosphate pyrophosphatase (209 aa).

Catalysis depends on Asp-79, which acts as the Proton acceptor.

The protein belongs to the Maf family. A divalent metal cation is required as a cofactor.

It is found in the cytoplasm. It catalyses the reaction a ribonucleoside 5'-triphosphate + H2O = a ribonucleoside 5'-phosphate + diphosphate + H(+). The enzyme catalyses a 2'-deoxyribonucleoside 5'-triphosphate + H2O = a 2'-deoxyribonucleoside 5'-phosphate + diphosphate + H(+). Its function is as follows. Nucleoside triphosphate pyrophosphatase. May have a dual role in cell division arrest and in preventing the incorporation of modified nucleotides into cellular nucleic acids. This is Nucleoside triphosphate pyrophosphatase from Mycolicibacterium vanbaalenii (strain DSM 7251 / JCM 13017 / BCRC 16820 / KCTC 9966 / NRRL B-24157 / PYR-1) (Mycobacterium vanbaalenii).